A 470-amino-acid chain; its full sequence is Cysteine--tRNA ligase (470 aa).

A Zn(2+)-binding site is contributed by C28. Positions 30-40 (PTVYNYIHIGN) match the 'HIGH' region motif. The Zn(2+) site is built by C212, H237, and E241. The 'KMSKS' region motif lies at 271 to 275 (KMSKS). Position 274 (K274) interacts with ATP.

The protein belongs to the class-I aminoacyl-tRNA synthetase family. Monomer. Zn(2+) serves as cofactor.

Its subcellular location is the cytoplasm. It carries out the reaction tRNA(Cys) + L-cysteine + ATP = L-cysteinyl-tRNA(Cys) + AMP + diphosphate. The protein is Cysteine--tRNA ligase of Levilactobacillus brevis (strain ATCC 367 / BCRC 12310 / CIP 105137 / JCM 1170 / LMG 11437 / NCIMB 947 / NCTC 947) (Lactobacillus brevis).